Reading from the N-terminus, the 151-residue chain is D-aminoacyl-tRNA deacylase (151 aa).

The short motif at 137–138 (GP) is the Gly-cisPro motif, important for rejection of L-amino acids element.

The protein belongs to the DTD family. In terms of assembly, homodimer.

It is found in the cytoplasm. The enzyme catalyses glycyl-tRNA(Ala) + H2O = tRNA(Ala) + glycine + H(+). It catalyses the reaction a D-aminoacyl-tRNA + H2O = a tRNA + a D-alpha-amino acid + H(+). In terms of biological role, an aminoacyl-tRNA editing enzyme that deacylates mischarged D-aminoacyl-tRNAs. Also deacylates mischarged glycyl-tRNA(Ala), protecting cells against glycine mischarging by AlaRS. Acts via tRNA-based rather than protein-based catalysis; rejects L-amino acids rather than detecting D-amino acids in the active site. By recycling D-aminoacyl-tRNA to D-amino acids and free tRNA molecules, this enzyme counteracts the toxicity associated with the formation of D-aminoacyl-tRNA entities in vivo and helps enforce protein L-homochirality. In Acaryochloris marina (strain MBIC 11017), this protein is D-aminoacyl-tRNA deacylase.